Here is a 222-residue protein sequence, read N- to C-terminus: Triosephosphate isomerase (222 aa).

9 to 11 (NYK) is a substrate binding site. Catalysis depends on histidine 93, which acts as the Electrophile. Glutamate 141 serves as the catalytic Proton acceptor. Residues isoleucine 146, glycine 181, and 202-203 (AS) contribute to the substrate site.

It belongs to the triosephosphate isomerase family. Homotetramer; dimer of dimers.

The protein localises to the cytoplasm. The catalysed reaction is D-glyceraldehyde 3-phosphate = dihydroxyacetone phosphate. It functions in the pathway carbohydrate biosynthesis; gluconeogenesis. Its pathway is carbohydrate degradation; glycolysis; D-glyceraldehyde 3-phosphate from glycerone phosphate: step 1/1. Its function is as follows. Involved in the gluconeogenesis. Catalyzes stereospecifically the conversion of dihydroxyacetone phosphate (DHAP) to D-glyceraldehyde-3-phosphate (G3P). In Methanosarcina barkeri (strain Fusaro / DSM 804), this protein is Triosephosphate isomerase.